The following is a 103-amino-acid chain: Large ribosomal subunit protein bL21 (103 aa).

Belongs to the bacterial ribosomal protein bL21 family. Part of the 50S ribosomal subunit. Contacts protein L20.

Its function is as follows. This protein binds to 23S rRNA in the presence of protein L20. The chain is Large ribosomal subunit protein bL21 from Brevibacillus brevis (strain 47 / JCM 6285 / NBRC 100599).